The primary structure comprises 95 residues: Large ribosomal subunit protein uL23 (95 aa).

This sequence belongs to the universal ribosomal protein uL23 family. In terms of assembly, part of the 50S ribosomal subunit. Contacts protein L29, and trigger factor when it is bound to the ribosome.

Functionally, one of the early assembly proteins it binds 23S rRNA. One of the proteins that surrounds the polypeptide exit tunnel on the outside of the ribosome. Forms the main docking site for trigger factor binding to the ribosome. The protein is Large ribosomal subunit protein uL23 of Coxiella burnetii (strain RSA 493 / Nine Mile phase I).